A 523-amino-acid chain; its full sequence is Pentatricopeptide repeat-containing protein At1g52640, mitochondrial (523 aa).

The transit peptide at 1–5 (MAIRT) directs the protein to the mitochondrion. PPR repeat units lie at residues 101 to 135 (SLES…NYFE), 137 to 171 (SSKV…GIKP), 172 to 206 (CVDD…GIVP), 207 to 241 (SAKT…NCVV), 242 to 276 (DLLA…GLKP), 277 to 311 (DAYS…DLVP), 312 to 346 (NVYT…GANP), 347 to 381 (DTWT…KCLP), 382 to 416 (DRHT…KFYP), and 417 to 452 (TVAT…GIPP). Positions 498–523 (KRRRLGRRSENSEDDDDDFELERDTI) are disordered. Over residues 509 to 523 (SEDDDDDFELERDTI) the composition is skewed to acidic residues.

This sequence belongs to the PPR family. P subfamily.

The protein resides in the mitochondrion. This chain is Pentatricopeptide repeat-containing protein At1g52640, mitochondrial, found in Arabidopsis thaliana (Mouse-ear cress).